The chain runs to 280 residues: Monoacylglycerol lipase (280 aa).

Ser-111 serves as the catalytic Nucleophile. Residues Asp-227 and His-257 each act as charge relay system in the active site.

This sequence belongs to the AB hydrolase superfamily.

Its subcellular location is the secreted. The protein localises to the cell wall. The catalysed reaction is Hydrolyzes glycerol monoesters of long-chain fatty acids.. Contributes to cell growth, probably by hydrolyzing exogenous lipids. Catalyzes the hydrolysis of monoacylglycerols (MAG) with fatty acid chains ranging from C14 to C18, with a maximum activity on monoolein. Is unable to hydrolyze long-chain diacylglycerol (DAG). This Mycolicibacterium smegmatis (strain ATCC 700084 / mc(2)155) (Mycobacterium smegmatis) protein is Monoacylglycerol lipase.